Reading from the N-terminus, the 1049-residue chain is Exotoxin PaxA (1049 aa).

4 helical membrane-spanning segments follow: residues Gly246–Ala266, Gly311–Leu331, Ile375–Gly395, and Leu397–Leu417. Hemolysin-type calcium-binding repeat units follow at residues Lys744–Leu761, Asn762–Leu779, Arg780–Leu797, Phe798–Leu815, Arg826–Leu843, and Asp844–Tyr861.

This sequence belongs to the RTX prokaryotic toxin (TC 1.C.11) family.

It localises to the secreted. The protein resides in the host cell membrane. Its function is as follows. PaxA is associated with abortion cases in swine and septicemia in young piglets. Shows cohemolytic activity with the sphingomyelinase of S.aureus but is devoid of direct hemolytic activity. In Pasteurella aerogenes, this protein is Exotoxin PaxA (paxA).